Reading from the N-terminus, the 182-residue chain is Pentatricopeptide repeat-containing protein At2g01360 (182 aa).

3 PPR repeats span residues 30-64 (EKSA…QHSL), 65-95 (GVYH…LPDD), and 98-132 (GLSA…EIMP).

This sequence belongs to the PPR family. P subfamily.

The chain is Pentatricopeptide repeat-containing protein At2g01360 from Arabidopsis thaliana (Mouse-ear cress).